The sequence spans 376 residues: Mannosyl phosphorylinositol ceramide synthase CSH1 (376 aa).

The next 2 membrane-spanning stretches (helical) occupy residues 7 to 27 and 274 to 294; these read ILII…FDLL and ILSC…GEFT. Residues 331–351 are disordered; it reads NKEKRRNPTRHEYNSRGKRLR. At serine 354 the chain carries Phosphoserine.

The protein belongs to the glycosyltransferase 32 family. Heterodimer of CSH1 and CSG2.

It is found in the vacuole membrane. It carries out the reaction a 1D-myo-inositol-1-phospho-N-[(R)-2-hydroxy-very-long-chain fatty acyl]-(R)-4-hydroxysphingoid base + GDP-alpha-D-mannose = an alpha-D-mannosyl-(1&lt;-&gt;6)-1D-myo-inositol-1-phospho-N-[(R)-2-hydroxy-very-long-chain fatty acyl]-(R)-4-hydroxysphingoid base + GDP + H(+). Functionally, involved in the synthesis of mannosyl phosphorylinositol ceramide. Catalyzes the addition of mannosyl to phosphorylinositol ceramide. This is Mannosyl phosphorylinositol ceramide synthase CSH1 from Saccharomyces cerevisiae (strain ATCC 204508 / S288c) (Baker's yeast).